Consider the following 393-residue polypeptide: Ig gamma-1 chain C region, membrane-bound form (393 aa).

The segment at 1 to 97 (AKTTPPSVYP…ASSTKVDKKI (97 aa)) is CH1. A disulfide bond links Cys27 and Cys82. Positions 98-110 (VPRDCGCKPCICT) are hinge. The CH2 stretch occupies residues 111–217 (VPEVSSVFIF…PIEKTISKTK (107 aa)). 2 disulfides stabilise this stretch: Cys138–Cys198 and Cys244–Cys302. Asn174 is a glycosylation site (N-linked (GlcNAc...) asparagine). The interval 218-324 (GRPKAPQVYT…EKSLSHSPGL (107 aa)) is CH3. The helical transmembrane segment at 340 to 357 (GLWTTITIFISLFLLSVC) threads the bilayer. Residues 358–393 (YSAAVTLFKVKWIFSSVVELKQTLVPEYKNMIGQAP) lie on the Cytoplasmic side of the membrane.

Its subcellular location is the cell membrane. The protein is Ig gamma-1 chain C region, membrane-bound form (Ighg1) of Mus musculus (Mouse).